The chain runs to 222 residues: Translation initiation factor 6 (222 aa).

This sequence belongs to the eIF-6 family.

Its function is as follows. Binds to the 50S ribosomal subunit and prevents its association with the 30S ribosomal subunit to form the 70S initiation complex. In Methanocorpusculum labreanum (strain ATCC 43576 / DSM 4855 / Z), this protein is Translation initiation factor 6.